The chain runs to 60 residues: Protein MGF 360-5L (60 aa).

Belongs to the asfivirus MGF 360 family.

Functionally, plays a role in virus cell tropism, and may be required for efficient virus replication in macrophages. This chain is Protein MGF 360-5L, found in Ornithodoros (relapsing fever ticks).